The sequence spans 67 residues: MKAKEIRDLTTEELRQKVNELKQELFNLRFQLATNQMDNPMRLKEVRRSIARAKTILRERELKQQRA.

The protein belongs to the universal ribosomal protein uL29 family.

This is Large ribosomal subunit protein uL29 from Moorella thermoacetica (strain ATCC 39073 / JCM 9320).